The chain runs to 156 residues: Small ribosomal subunit protein uS7 (156 aa).

It belongs to the universal ribosomal protein uS7 family. Part of the 30S ribosomal subunit. Contacts proteins S9 and S11.

Its function is as follows. One of the primary rRNA binding proteins, it binds directly to 16S rRNA where it nucleates assembly of the head domain of the 30S subunit. Is located at the subunit interface close to the decoding center, probably blocks exit of the E-site tRNA. This chain is Small ribosomal subunit protein uS7, found in Syntrophus aciditrophicus (strain SB).